We begin with the raw amino-acid sequence, 515 residues long: Zinc metalloproteinase-disintegrin-like EoMP06 (515 aa).

Residues 1–94 constitute a propeptide that is removed on maturation; sequence VEDHCYYHGR…TLGLIVPPHG (94 aa). Gln-95 bears the Pyrrolidone carboxylic acid mark. One can recognise a Peptidase M12B domain in the interval 100-296; the sequence is KFIELIIVVD…YNPKCIVDPP (197 aa). Glu-103 is a Ca(2+) binding site. N-linked (GlcNAc...) asparagine glycosylation is present at Asn-160. Asp-187 contacts Ca(2+). 2 N-linked (GlcNAc...) asparagine glycosylation sites follow: Asn-194 and Asn-225. 3 cysteine pairs are disulfide-bonded: Cys-211/Cys-291, Cys-251/Cys-275, and Cys-253/Cys-258. His-236 contributes to the Zn(2+) binding site. Glu-237 is an active-site residue. Residues His-240 and His-246 each coordinate Zn(2+). Ca(2+)-binding residues include Cys-291, Val-306, Asn-309, Val-311, Glu-313, Glu-316, and Asp-319. The Disintegrin domain occupies 304 to 390; it reads PAVCGNGVWE…ECPRNEFQRN (87 aa). Disulfide bonds link Cys-307/Cys-336, Cys-318/Cys-331, Cys-320/Cys-326, Cys-330/Cys-353, Cys-344/Cys-350, Cys-349/Cys-375, Cys-362/Cys-382, Cys-369/Cys-401, Cys-394/Cys-406, Cys-413/Cys-466, Cys-428/Cys-477, Cys-441/Cys-454, Cys-461/Cys-503, and Cys-497/Cys-508. Positions 368–370 match the D/ECD-tripeptide motif; sequence DCD. Asp-370, Val-371, and Asn-385 together coordinate Ca(2+).

Belongs to the venom metalloproteinase (M12B) family. P-III subfamily. P-IIIa sub-subfamily. As to quaternary structure, monomer. The cofactor is Zn(2+). As to expression, expressed by the venom gland.

The protein localises to the secreted. Functionally, snake venom zinc metalloproteinase that catalyzes the conversion of prothrombin (F2) to alpha-thrombin through formation of a thrombin intermediate, thereby functioning as a procoagulant protein. The sequence is that of Zinc metalloproteinase-disintegrin-like EoMP06 from Echis ocellatus (Ocellated saw-scaled viper).